A 152-amino-acid polypeptide reads, in one-letter code: Transcriptional regulator MraZ (152 aa).

SpoVT-AbrB domains lie at 5–52 (ATLV…PLPE) and 81–124 (ASEC…DETT).

The protein belongs to the MraZ family. Forms oligomers.

The protein localises to the cytoplasm. The protein resides in the nucleoid. In terms of biological role, negatively regulates its own expression and that of the subsequent genes in the proximal part of the division and cell wall (dcw) gene cluster. Acts by binding directly to DNA. May also regulate the expression of genes outside the dcw cluster. This Klebsiella pneumoniae subsp. pneumoniae (strain ATCC 700721 / MGH 78578) protein is Transcriptional regulator MraZ.